A 250-amino-acid polypeptide reads, in one-letter code: Carboxymethylproline synthase (250 aa).

60-64 contributes to the malonyl-CoA binding site; it reads AGGDF.

It belongs to the enoyl-CoA hydratase/isomerase family. Homotrimer.

It carries out the reaction (S)-1-pyrroline-5-carboxylate + malonyl-CoA + H2O + H(+) = (2S,5S)-5-carboxymethylproline + CO2 + CoA. Its pathway is antibiotic biosynthesis; carbapenem biosynthesis. Catalyzes the formation of (2S,5S)-carboxymethylproline (t-CMP) from malonyl-CoA and (S)-1-pyrroline-5-carboxylate, the first step in the biosynthesis of (5R)-carbapen-2-em-3-carboxylate, a beta-lactam antibiotic of the carbapenem class. Also catalyzes the independent decarboxylation of malonyl-CoA and methylmalonyl-CoA and the hydrolysis of CoA esters such as acetyl-CoA and propionyl-CoA. Catalyzes the reaction with a C2 epimeric mixture of methylmalonyl-CoA to give a 55:45 mixture of (6R)- and (6S)-epimers of 6-methyl-t-CMP, under standard incubation conditions. The sequence is that of Carboxymethylproline synthase from Pectobacterium carotovorum subsp. carotovorum (Erwinia carotovora subsp. carotovora).